Reading from the N-terminus, the 159-residue chain is 18.0 kDa class I heat shock protein (159 aa).

The region spanning 45–159 is the sHSP domain; it reads ETAAFANTHI…PEVKSIHISG (115 aa).

This sequence belongs to the small heat shock protein (HSP20) family. In terms of assembly, forms oligomeric structures.

It localises to the cytoplasm. The sequence is that of 18.0 kDa class I heat shock protein from Daucus carota (Wild carrot).